A 1241-amino-acid chain; its full sequence is DNA-directed RNA polymerase subunit beta (1241 aa).

The interval 1195–1219 is disordered; that stretch reads PQDVQENVSGENVDAGYENEDVDID.

This sequence belongs to the RNA polymerase beta chain family. In terms of assembly, the RNAP catalytic core consists of 2 alpha, 1 beta, 1 beta' and 1 omega subunit. When a sigma factor is associated with the core the holoenzyme is formed, which can initiate transcription.

The enzyme catalyses RNA(n) + a ribonucleoside 5'-triphosphate = RNA(n+1) + diphosphate. In terms of biological role, DNA-dependent RNA polymerase catalyzes the transcription of DNA into RNA using the four ribonucleoside triphosphates as substrates. The protein is DNA-directed RNA polymerase subunit beta of Clostridium acetobutylicum (strain ATCC 824 / DSM 792 / JCM 1419 / IAM 19013 / LMG 5710 / NBRC 13948 / NRRL B-527 / VKM B-1787 / 2291 / W).